The chain runs to 354 residues: Histidinol-phosphate aminotransferase (354 aa).

K210 carries the post-translational modification N6-(pyridoxal phosphate)lysine.

It belongs to the class-II pyridoxal-phosphate-dependent aminotransferase family. Histidinol-phosphate aminotransferase subfamily. Homodimer. Requires pyridoxal 5'-phosphate as cofactor.

The catalysed reaction is L-histidinol phosphate + 2-oxoglutarate = 3-(imidazol-4-yl)-2-oxopropyl phosphate + L-glutamate. It participates in amino-acid biosynthesis; L-histidine biosynthesis; L-histidine from 5-phospho-alpha-D-ribose 1-diphosphate: step 7/9. The polypeptide is Histidinol-phosphate aminotransferase (Clostridium botulinum (strain ATCC 19397 / Type A)).